The sequence spans 485 residues: Ataxin-10 (485 aa).

This sequence belongs to the ataxin-10 family.

The protein localises to the cytoplasm. Its subcellular location is the perinuclear region. It is found in the midbody. May play a role in the regulation of cytokinesis. May play a role in signaling by stimulating protein glycosylation. Induces neuritogenesis by activating the Ras-MAP kinase pathway and is necessary for the survival of cerebellar neurons. Does not appear to play a major role in ciliogenesis. The protein is Ataxin-10 (atxn10) of Xenopus tropicalis (Western clawed frog).